The primary structure comprises 62 residues: Sec-independent protein translocase protein TatA (62 aa).

Residues 10–32 form a helical membrane-spanning segment; the sequence is LLIILIIVIAIFGAGKLAGLGGA.

The protein belongs to the TatA/E family. As to quaternary structure, forms a complex with TatC.

The protein localises to the cell membrane. In terms of biological role, part of the twin-arginine translocation (Tat) system that transports large folded proteins containing a characteristic twin-arginine motif in their signal peptide across membranes. TatA could form the protein-conducting channel of the Tat system. This chain is Sec-independent protein translocase protein TatA, found in Chloroflexus aurantiacus (strain ATCC 29366 / DSM 635 / J-10-fl).